The chain runs to 377 residues: uncharacterized protein (377 aa).

10 consecutive transmembrane segments (helical) span residues 4–24, 41–61, 85–105, 134–154, 159–179, 192–212, 278–298, 301–321, 327–347, and 356–376; these read LLTP…LLGT, ASFG…FPIT, IAAL…FLFG, FHAM…IATV, VYVH…PFLL, GAVG…IALA, VFGI…AGFV, GVGY…DLVV, IASV…AIGL, and LCFF…PVLK.

To R.meliloti MosC.

Its subcellular location is the cell membrane. Could be involved in a transport system. This is an uncharacterized protein from Sinorhizobium fredii (strain NBRC 101917 / NGR234).